Reading from the N-terminus, the 508-residue chain is Photosystem II CP47 reaction center protein (508 aa).

Transmembrane regions (helical) follow at residues 21–36 (AVHI…WAGS), 101–115 (IVFS…IWHW), 140–156 (GIHL…FGAF), 203–218 (IAAG…FHLS), 237–252 (VLSS…AFVV), and 457–472 (SFAL…HGAR).

It belongs to the PsbB/PsbC family. PsbB subfamily. As to quaternary structure, PSII is composed of 1 copy each of membrane proteins PsbA, PsbB, PsbC, PsbD, PsbE, PsbF, PsbH, PsbI, PsbJ, PsbK, PsbL, PsbM, PsbT, PsbX, PsbY, PsbZ, Psb30/Ycf12, at least 3 peripheral proteins of the oxygen-evolving complex and a large number of cofactors. It forms dimeric complexes. Binds multiple chlorophylls. PSII binds additional chlorophylls, carotenoids and specific lipids. is required as a cofactor.

The protein localises to the plastid. The protein resides in the chloroplast thylakoid membrane. In terms of biological role, one of the components of the core complex of photosystem II (PSII). It binds chlorophyll and helps catalyze the primary light-induced photochemical processes of PSII. PSII is a light-driven water:plastoquinone oxidoreductase, using light energy to abstract electrons from H(2)O, generating O(2) and a proton gradient subsequently used for ATP formation. The polypeptide is Photosystem II CP47 reaction center protein (Nandina domestica (Heavenly bamboo)).